Consider the following 311-residue polypeptide: Cytosolic Fe-S cluster assembly factor Nubp1 homolog (311 aa).

[4Fe-4S] cluster is bound by residues cysteine 9, cysteine 23, cysteine 26, and cysteine 32. 63 to 70 (GKGGVGKS) lines the ATP pocket. [4Fe-4S] cluster contacts are provided by cysteine 240 and cysteine 243.

It belongs to the Mrp/NBP35 ATP-binding proteins family. NUBP1/NBP35 subfamily. Heterotetramer of 2 Nubp1 and 2 Nubp2 chains. [4Fe-4S] cluster is required as a cofactor.

The protein localises to the cytoplasm. Functionally, component of the cytosolic iron-sulfur (Fe/S) protein assembly (CIA) machinery. Required for maturation of extramitochondrial Fe-S proteins. The Nubp1-Nubp2 heterotetramer forms a Fe-S scaffold complex, mediating the de novo assembly of an Fe-S cluster and its transfer to target apoproteins. The protein is Cytosolic Fe-S cluster assembly factor Nubp1 homolog of Drosophila pseudoobscura pseudoobscura (Fruit fly).